The sequence spans 274 residues: Orotidine 5'-phosphate decarboxylase (274 aa).

The Proton donor role is filled by Lys95.

Belongs to the OMP decarboxylase family. Type 2 subfamily.

The catalysed reaction is orotidine 5'-phosphate + H(+) = UMP + CO2. The protein operates within pyrimidine metabolism; UMP biosynthesis via de novo pathway; UMP from orotate: step 2/2. The sequence is that of Orotidine 5'-phosphate decarboxylase from Variovorax paradoxus (strain S110).